The primary structure comprises 884 residues: Protein P (884 aa).

The terminal protein domain (TP) stretch occupies residues 1 to 184; sequence MHPFSRLFRN…GKPYSWEHRQ (184 aa). The spacer stretch occupies residues 185-387; that stretch reads LVQHNGQQHK…YCIHHIVSSL (203 aa). Disordered regions lie at residues 218–241 and 299–345; these read PSEPVSVSTRNLSNNISDKSQKST and RNSG…DFSS. 2 stretches are compositionally biased toward polar residues: residues 222 to 241 and 323 to 332; these read VSVSTRNLSNNISDKSQKST and YSSNSTSQRY. The polymerase/reverse transcriptase domain (RT) stretch occupies residues 388 to 729; the sequence is DDWGPCTVTG…YEELWPVVRQ (342 aa). Residues 398 to 639 form the Reverse transcriptase domain; that stretch reads DVTIKSPRTP…NHLHFMGYVI (242 aa). 3 residues coordinate Mg(2+): Asp470, Asp590, and Asp591.

Belongs to the hepadnaviridae P protein family.

It catalyses the reaction DNA(n) + a 2'-deoxyribonucleoside 5'-triphosphate = DNA(n+1) + diphosphate. The catalysed reaction is Endonucleolytic cleavage to 5'-phosphomonoester.. Activated by host HSP70 and HSP40 in vitro to be able to bind the epsilon loop of the pgRNA. Because deletion of the RNase H region renders the protein partly chaperone-independent, the chaperones may be needed indirectly to relieve occlusion of the RNA-binding site by this domain. Inhibited by several reverse-transcriptase inhibitors: Lamivudine, Adefovir and Entecavir. Functionally, multifunctional enzyme that converts the viral RNA genome into dsDNA in viral cytoplasmic capsids. This enzyme displays a DNA polymerase activity that can copy either DNA or RNA templates, and a ribonuclease H (RNase H) activity that cleaves the RNA strand of RNA-DNA heteroduplexes in a partially processive 3'- to 5'-endonucleasic mode. Neo-synthesized pregenomic RNA (pgRNA) are encapsidated together with the P protein, and reverse-transcribed inside the nucleocapsid. Initiation of reverse-transcription occurs first by binding the epsilon loop on the pgRNA genome, and is initiated by protein priming, thereby the 5'-end of (-)DNA is covalently linked to P protein. Partial (+)DNA is synthesized from the (-)DNA template and generates the relaxed circular DNA (RC-DNA) genome. After budding and infection, the RC-DNA migrates in the nucleus, and is converted into a plasmid-like covalently closed circular DNA (cccDNA). The activity of P protein does not seem to be necessary for cccDNA generation, and is presumably released from (+)DNA by host nuclear DNA repair machinery. The polypeptide is Protein P (Marmota monax (Woodchuck)).